Consider the following 160-residue polypeptide: Cytochrome b6-f complex subunit 4 (160 aa).

Helical transmembrane passes span 36 to 56, 95 to 115, and 131 to 151; these read LLYI…GLSV, LLGV…PFIE, and TVFL…ALPI.

The protein belongs to the cytochrome b family. PetD subfamily. The 4 large subunits of the cytochrome b6-f complex are cytochrome b6, subunit IV (17 kDa polypeptide, petD), cytochrome f and the Rieske protein, while the 4 small subunits are petG, petL, petM and petN. The complex functions as a dimer.

The protein localises to the plastid. It localises to the chloroplast thylakoid membrane. Functionally, component of the cytochrome b6-f complex, which mediates electron transfer between photosystem II (PSII) and photosystem I (PSI), cyclic electron flow around PSI, and state transitions. The protein is Cytochrome b6-f complex subunit 4 of Chlorella vulgaris (Green alga).